The primary structure comprises 445 residues: Argininosuccinate synthase (445 aa).

ATP is bound by residues 17–25 (AFSGGLDTS) and Ala-43. Residue Tyr-99 coordinates L-citrulline. ATP is bound by residues Gly-129 and Thr-131. Residues Thr-131, Asn-135, and Asp-136 each coordinate L-aspartate. Asn-135 lines the L-citrulline pocket. Asp-136 provides a ligand contact to ATP. Residues Arg-139 and Ser-192 each contribute to the L-citrulline site. Residue Asp-194 coordinates ATP. 3 residues coordinate L-citrulline: Thr-201, Glu-203, and Glu-280.

This sequence belongs to the argininosuccinate synthase family. Type 2 subfamily. Homotetramer.

It is found in the cytoplasm. The enzyme catalyses L-citrulline + L-aspartate + ATP = 2-(N(omega)-L-arginino)succinate + AMP + diphosphate + H(+). Its pathway is amino-acid biosynthesis; L-arginine biosynthesis; L-arginine from L-ornithine and carbamoyl phosphate: step 2/3. The polypeptide is Argininosuccinate synthase (Gemmatimonas aurantiaca (strain DSM 14586 / JCM 11422 / NBRC 100505 / T-27)).